The primary structure comprises 257 residues: Ditrans,polycis-undecaprenyl-diphosphate synthase ((2E,6E)-farnesyl-diphosphate specific) (257 aa).

Residue Asp-24 is part of the active site. Asp-24 is a binding site for Mg(2+). Substrate is bound by residues 25 to 28, Trp-29, Arg-37, His-41, and 69 to 71; these read GNGR and SSE. The Proton acceptor role is filled by Asn-72. Residues Trp-73, Arg-75, Arg-192, and 198-200 contribute to the substrate site; that span reads RIS. A Mg(2+)-binding site is contributed by Glu-211.

Belongs to the UPP synthase family. In terms of assembly, homodimer. Mg(2+) is required as a cofactor.

It carries out the reaction 8 isopentenyl diphosphate + (2E,6E)-farnesyl diphosphate = di-trans,octa-cis-undecaprenyl diphosphate + 8 diphosphate. In terms of biological role, catalyzes the sequential condensation of isopentenyl diphosphate (IPP) with (2E,6E)-farnesyl diphosphate (E,E-FPP) to yield (2Z,6Z,10Z,14Z,18Z,22Z,26Z,30Z,34E,38E)-undecaprenyl diphosphate (di-trans,octa-cis-UPP). UPP is the precursor of glycosyl carrier lipid in the biosynthesis of bacterial cell wall polysaccharide components such as peptidoglycan and lipopolysaccharide. This Aliivibrio fischeri (strain ATCC 700601 / ES114) (Vibrio fischeri) protein is Ditrans,polycis-undecaprenyl-diphosphate synthase ((2E,6E)-farnesyl-diphosphate specific).